The primary structure comprises 231 residues: Large ribosomal subunit protein uL1 (231 aa).

It belongs to the universal ribosomal protein uL1 family. In terms of assembly, part of the 50S ribosomal subunit.

Functionally, binds directly to 23S rRNA. The L1 stalk is quite mobile in the ribosome, and is involved in E site tRNA release. Its function is as follows. Protein L1 is also a translational repressor protein, it controls the translation of the L11 operon by binding to its mRNA. The protein is Large ribosomal subunit protein uL1 of Halorhodospira halophila (strain DSM 244 / SL1) (Ectothiorhodospira halophila (strain DSM 244 / SL1)).